A 570-amino-acid polypeptide reads, in one-letter code: Protein NRT1/ PTR FAMILY 8.1 (570 aa).

Phosphothreonine is present on Thr98. 10 consecutive transmembrane segments (helical) span residues 99–119 (IATFVFIYVSGMTLLTLSASV), 140–160 (AVFFVALYMIALGTGGIKPCV), 182–202 (FFNWFYFSINVGALIAATVLV), 210–230 (WGWGFGVPTVAMVIAVCFFFF), 329–349 (IITLLPVWATGIVFATVYSQM), 377–397 (LFDTVSVLFWTPVYDQFIIPL), 414–434 (MGIGLVVSIFAMITAGVLEVV), 454–474 (IFWQIPQYLLIGCAEVFTFIG), 494–514 (LSLTTVALGNYLSTVLVTVVM), and 537–557 (YFFYLLATLSFLNFLVYLWIS).

This sequence belongs to the major facilitator superfamily. Proton-dependent oligopeptide transporter (POT/PTR) (TC 2.A.17) family. As to expression, expressed in cotyledons, hypocotyls, leaves, roots, flowers, pistils and vascular tissue of sepals, anthers, carpels and funiculi. Not detected in seeds.

It is found in the cell membrane. Functionally, peptide transporter. Mediates the transport of di- and tripeptides. High affinity transporter with low selectivity. No transport of amino acids. This Arabidopsis thaliana (Mouse-ear cress) protein is Protein NRT1/ PTR FAMILY 8.1 (NPF8.1).